A 183-amino-acid polypeptide reads, in one-letter code: Bifunctional protein PyrR (183 aa).

Substrate contacts are provided by residues 42-43 (TR), R87, 104-112 (DDVLYTGRT), R137, and V161. The short motif at 100–112 (VILVDDVLYTGRT) is the PRPP-binding element.

This sequence belongs to the purine/pyrimidine phosphoribosyltransferase family. PyrR subfamily.

It catalyses the reaction UMP + diphosphate = 5-phospho-alpha-D-ribose 1-diphosphate + uracil. In terms of biological role, regulates the transcription of the pyrimidine nucleotide (pyr) operon in response to exogenous pyrimidines. Functionally, also displays a weak uracil phosphoribosyltransferase activity which is not physiologically significant. This is Bifunctional protein PyrR from Deinococcus radiodurans (strain ATCC 13939 / DSM 20539 / JCM 16871 / CCUG 27074 / LMG 4051 / NBRC 15346 / NCIMB 9279 / VKM B-1422 / R1).